Consider the following 941-residue polypeptide: RNA-binding protein 4F (941 aa).

Over residues 1–13 the composition is skewed to basic and acidic residues; the sequence is MDADKQLERQLEK. Positions 1–149 are disordered; sequence MDADKQLERQ…DSDNAGGGNQ (149 aa). Over residues 14 to 32 the composition is skewed to acidic residues; the sequence is ELDEMPAEDLDDDAYDEYD. Positions 42–52 are enriched in polar residues; the sequence is GSPQQGHSESP. Phosphoserine is present on serine 43. Residues 55-65 show a composition bias toward basic and acidic residues; the sequence is EEEHKSEELRQ. The span at 87-98 shows a compositional bias: acidic residues; sequence SSDDEPSVEETE. Residues 111–134 are compositionally biased toward low complexity; it reads DSSSSSDDVGVIEGSELESNSEVS. Serine 153 is modified (phosphoserine). The tract at residues 629 to 713 is disordered; the sequence is RSRIKPNSQS…GPANAEAKES (85 aa). Positions 671–680 are enriched in low complexity; sequence EQQQQQQQQQ. The residue at position 713 (serine 713) is a Phosphoserine. Residue tyrosine 717 is modified to Phosphotyrosine. At serine 718 the chain carries Phosphoserine. The 78-residue stretch at 724–801 folds into the RRM domain; it reads NKIFVRNLHP…MNISVAISNP (78 aa). Composition is skewed to basic and acidic residues over residues 862–902, 913–922, and 930–941; these read EANG…KGDD, QKGDEKKEEE, and SNDDFRKLFLKD. The disordered stretch occupies residues 862–941; that stretch reads EANGEEQKGD…DDFRKLFLKD (80 aa).

The protein localises to the cytoplasm. May be involved in gene regulation during development. Binds RNA. This Drosophila melanogaster (Fruit fly) protein is RNA-binding protein 4F.